The sequence spans 316 residues: Rhomboid-related protein 4 (316 aa).

Residues 1–21 (MQRRTRGIDTGLLLLLSQVFH) lie on the Cytoplasmic side of the membrane. Residues 22–42 (IGINNIPPVTLATLAVNVWFF) traverse the membrane as a helical segment. Residues 43–103 (LNPWKPLYHS…KLEKRLGSRW (61 aa)) lie on the Extracellular side of the membrane. A helical transmembrane segment spans residues 104–124 (FAYIIATFSLLTGVVYLLLQF). Residues 125–137 (ASAELMNQPDFKR) are Cytoplasmic-facing. A helical transmembrane segment spans residues 138-154 (NCAVGFSGVLFALKVLS). Ser-144 acts as the Nucleophile in catalysis. Over 155–182 (NHYCPGGFVNILGFPVPNRFACWAELAA) the chain is Extracellular. A helical membrane pass occupies residues 183-203 (IHFCTPGTSFAGHLAGILVGL). His-195 is a catalytic residue. Topologically, residues 204–316 (MYTQGPLKKI…RQRLHRFDGQ (113 aa)) are cytoplasmic. The segment at 269 to 284 (SEEEQLERALRASIWD) is ubiquitin-binding domain (UBD). Residues 301–316 (PEEEMRRQRLHRFDGQ) are VCP/p97-interacting motif (VIM).

It belongs to the peptidase S54 family. In terms of assembly, interacts with BIK and STEAP3. Interacts (via C-terminal domain) with VCP. Interacts with ubiquitin and ubiquitinated proteins. As to expression, expressed in intestine, lung, brain, kidney, epididymis and testis.

Its subcellular location is the endoplasmic reticulum membrane. The protein localises to the mitochondrion membrane. The enzyme catalyses Cleaves type-1 transmembrane domains using a catalytic dyad composed of serine and histidine that are contributed by different transmembrane domains.. Its activity is regulated as follows. Inhibited by aprotinin. In terms of biological role, intramembrane-cleaving serine protease that cleaves single transmembrane or multi-pass membrane proteins in the hydrophobic plane of the membrane, luminal loops and juxtamembrane regions. Involved in regulated intramembrane proteolysis and the subsequent release of functional polypeptides from their membrane anchors. Functional component of endoplasmic reticulum-associated degradation (ERAD) for misfolded membrane proteins. Required for the degradation process of some specific misfolded endoplasmic reticulum (ER) luminal proteins. Participates in the transfer of misfolded proteins from the ER to the cytosol, where they are destroyed by the proteasome in a ubiquitin-dependent manner. Functions in BIK, MPZ, PKD1, PTCRA, RHO, STEAP3 and TRAC processing. Involved in the regulation of exosomal secretion; inhibits the TSAP6-mediated secretion pathway. Involved in the regulation of apoptosis; modulates BIK-mediated apoptotic activity. Also plays a role in the regulation of spermatogenesis; inhibits apoptotic activity in spermatogonia. This is Rhomboid-related protein 4 (Rhbdd1) from Rattus norvegicus (Rat).